The sequence spans 1932 residues: DOCK-like protein 1 (1932 aa).

In terms of domain architecture, DOCKER spans 1410–1824 (LLEANRPELF…EIERYSRTLS (415 aa)). Over residues 1908–1921 (STFLAGSQPNTNTD) the composition is skewed to polar residues. Positions 1908–1932 (STFLAGSQPNTNTDSQHKHDYSHSG) are disordered. A compositionally biased stretch (basic and acidic residues) spans 1922–1932 (SQHKHDYSHSG).

This sequence belongs to the DOCK family. As to quaternary structure, forms an active heterodimer with LMO1.

It is found in the cytoplasm. The protein resides in the mitochondrion. In terms of biological role, forms a transiant heterodimeric complex with LMO1, that acts as a guanine nucleotide exchange factor exchange factor (GEF) for the small GTPase RHO5. DCK1, LMO1 and RHO5 relocate to mitochondria upon oxidative stress and trigger cell death. The DCK1/LMO1/RHO5 signaling module mediates mitochondrial turnover under nitrogen starvation conditions via mitophagy. The DCK1/LMO1/RHO5 signaling module plays also a function in cell wall integrity signaling. This chain is DOCK-like protein 1, found in Saccharomyces cerevisiae (strain ATCC 204508 / S288c) (Baker's yeast).